Here is a 277-residue protein sequence, read N- to C-terminus: Large ribosomal subunit protein uL2 (277 aa).

Disordered stretches follow at residues K37–H60 and V223–T264. The segment covering S39–I49 has biased composition (polar residues). A compositionally biased stretch (basic residues) spans T50–H60. The segment covering D229–E244 has biased composition (basic and acidic residues).

This sequence belongs to the universal ribosomal protein uL2 family. As to quaternary structure, part of the 50S ribosomal subunit. Forms a bridge to the 30S subunit in the 70S ribosome.

Functionally, one of the primary rRNA binding proteins. Required for association of the 30S and 50S subunits to form the 70S ribosome, for tRNA binding and peptide bond formation. It has been suggested to have peptidyltransferase activity; this is somewhat controversial. Makes several contacts with the 16S rRNA in the 70S ribosome. This Neisseria gonorrhoeae (strain ATCC 700825 / FA 1090) protein is Large ribosomal subunit protein uL2.